The chain runs to 443 residues: Glucose-6-phosphate isomerase (443 aa).

Glutamate 285 acts as the Proton donor in catalysis. Residues histidine 306 and lysine 420 contribute to the active site.

Belongs to the GPI family.

It localises to the cytoplasm. It catalyses the reaction alpha-D-glucose 6-phosphate = beta-D-fructose 6-phosphate. Its pathway is carbohydrate biosynthesis; gluconeogenesis. The protein operates within carbohydrate degradation; glycolysis; D-glyceraldehyde 3-phosphate and glycerone phosphate from D-glucose: step 2/4. Catalyzes the reversible isomerization of glucose-6-phosphate to fructose-6-phosphate. This chain is Glucose-6-phosphate isomerase, found in Staphylococcus aureus (strain USA300).